We begin with the raw amino-acid sequence, 103 residues long: Histone H4, minor (103 aa).

The segment covering 1 to 12 (MAGGKGGKGMGK) has biased composition (gly residues). Residues 1-29 (MAGGKGGKGMGKVGAKRHSRKSNKASIEG) form a disordered region. N6-acetyllysine occurs at positions 5, 8, 12, and 16. The segment covering 14–23 (GAKRHSRKSN) has biased composition (basic residues). The DNA-binding element occupies 16 to 21 (KRHSRK).

Belongs to the histone H4 family. The nucleosome is a histone octamer containing two molecules each of H2A, H2B, H3 and H4 assembled in one H3-H4 heterotetramer and two H2A-H2B heterodimers. The octamer wraps approximately 147 bp of DNA.

Its subcellular location is the nucleus. It is found in the chromosome. Functionally, core component of nucleosome. Nucleosomes wrap and compact DNA into chromatin, limiting DNA accessibility to the cellular machineries which require DNA as a template. Histones thereby play a central role in transcription regulation, DNA repair, DNA replication and chromosomal stability. DNA accessibility is regulated via a complex set of post-translational modifications of histones, also called histone code, and nucleosome remodeling. This is Histone H4, minor from Tetrahymena pyriformis.